The following is a 124-amino-acid chain: Fluoride-specific ion channel FluC (124 aa).

The next 4 membrane-spanning stretches (helical) occupy residues 5–25 (ILAV…AGTW), 38–58 (TLAV…WFLL), 69–89 (GLIV…LDTL), and 97–117 (ALIA…ATWA). Positions 76 and 79 each coordinate Na(+).

The protein belongs to the fluoride channel Fluc/FEX (TC 1.A.43) family.

The protein resides in the cell inner membrane. The catalysed reaction is fluoride(in) = fluoride(out). Na(+) is not transported, but it plays an essential structural role and its presence is essential for fluoride channel function. In terms of biological role, fluoride-specific ion channel. Important for reducing fluoride concentration in the cell, thus reducing its toxicity. This is Fluoride-specific ion channel FluC from Pseudomonas fluorescens (strain SBW25).